The following is a 322-amino-acid chain: MKIGNYQLKNKLIVAPMAGVTDRPFRELCLRYGAGMAVSEMMSSNPQLWKTSKSKQRMVHEGESGIRSVQIAGSDPQLMADAAQFSVENGAQIIDINMGCPAKKVNKKLAGSALLKYPDIIEQILKAVVDAVDVPVTLKTRTGWDTENKNCIHIAKLAEDCGIQALALHGRTKACMYKGEAEYDSIKAVKQAVSIPVIANGDIDSPEKAKYVLEYTGADALMIGRPAQGRPWIFQEIHHYLENGTTMPELPIEEVKSIMLGHVQALHEFYGEYLGPRIARKHVGWYLKEHEQASEFRRTFNAIDAAMLQLEALEGYFDNVAS.

Residues 16-18 and Q70 each bind FMN; that span reads PMA. The Proton donor role is filled by C100. FMN-binding positions include K139, 200–202, and 224–225; these read NGD and GR.

Belongs to the Dus family. DusB subfamily. Requires FMN as cofactor.

The catalysed reaction is a 5,6-dihydrouridine in tRNA + NAD(+) = a uridine in tRNA + NADH + H(+). It carries out the reaction a 5,6-dihydrouridine in tRNA + NADP(+) = a uridine in tRNA + NADPH + H(+). Functionally, catalyzes the synthesis of 5,6-dihydrouridine (D), a modified base found in the D-loop of most tRNAs, via the reduction of the C5-C6 double bond in target uridines. This Vibrio vulnificus (strain CMCP6) protein is tRNA-dihydrouridine synthase B.